The sequence spans 405 residues: NADH-quinone oxidoreductase subunit D (405 aa).

It belongs to the complex I 49 kDa subunit family. As to quaternary structure, NDH-1 is composed of 14 different subunits. Subunits NuoB, C, D, E, F, and G constitute the peripheral sector of the complex.

The protein localises to the cell inner membrane. It catalyses the reaction a quinone + NADH + 5 H(+)(in) = a quinol + NAD(+) + 4 H(+)(out). In terms of biological role, NDH-1 shuttles electrons from NADH, via FMN and iron-sulfur (Fe-S) centers, to quinones in the respiratory chain. The immediate electron acceptor for the enzyme in this species is believed to be ubiquinone. Couples the redox reaction to proton translocation (for every two electrons transferred, four hydrogen ions are translocated across the cytoplasmic membrane), and thus conserves the redox energy in a proton gradient. In Afipia carboxidovorans (strain ATCC 49405 / DSM 1227 / KCTC 32145 / OM5) (Oligotropha carboxidovorans), this protein is NADH-quinone oxidoreductase subunit D.